Consider the following 102-residue polypeptide: A-type ATP synthase subunit F (102 aa).

It belongs to the V-ATPase F subunit family. As to quaternary structure, has multiple subunits with at least A(3), B(3), C, D, E, F, H, I and proteolipid K(x).

It is found in the cell membrane. Functionally, component of the A-type ATP synthase that produces ATP from ADP in the presence of a proton gradient across the membrane. The protein is A-type ATP synthase subunit F of Thermococcus gammatolerans (strain DSM 15229 / JCM 11827 / EJ3).